We begin with the raw amino-acid sequence, 425 residues long: Serine--tRNA ligase 1 (425 aa).

230–232 (TSE) lines the L-serine pocket. ATP contacts are provided by residues 261–263 (RRE) and V277. Position 284 (E284) interacts with L-serine. Residue 348-351 (ELTS) participates in ATP binding. Residue T382 participates in L-serine binding.

Belongs to the class-II aminoacyl-tRNA synthetase family. Type-1 seryl-tRNA synthetase subfamily. In terms of assembly, homodimer. The tRNA molecule binds across the dimer.

It localises to the cytoplasm. The catalysed reaction is tRNA(Ser) + L-serine + ATP = L-seryl-tRNA(Ser) + AMP + diphosphate + H(+). It carries out the reaction tRNA(Sec) + L-serine + ATP = L-seryl-tRNA(Sec) + AMP + diphosphate + H(+). It functions in the pathway aminoacyl-tRNA biosynthesis; selenocysteinyl-tRNA(Sec) biosynthesis; L-seryl-tRNA(Sec) from L-serine and tRNA(Sec): step 1/1. Catalyzes the attachment of serine to tRNA(Ser). Is also able to aminoacylate tRNA(Sec) with serine, to form the misacylated tRNA L-seryl-tRNA(Sec), which will be further converted into selenocysteinyl-tRNA(Sec). This is Serine--tRNA ligase 1 from Streptomyces avermitilis (strain ATCC 31267 / DSM 46492 / JCM 5070 / NBRC 14893 / NCIMB 12804 / NRRL 8165 / MA-4680).